An 827-amino-acid chain; its full sequence is Periplasmic nitrate reductase (827 aa).

Positions 1-32 (MELNRRDFMKANAAMAAAAAAGMTIPVKNVYA) form a signal peptide, tat-type signal. Residues 37 to 93 (IRWDKAPCRFCGTGCSVLVGTKDGRVVATQGDPDAEVNRGLNCIKGYFLSKIMYGAD) form the 4Fe-4S Mo/W bis-MGD-type domain. [4Fe-4S] cluster contacts are provided by Cys-44, Cys-47, Cys-51, and Cys-79. Residues Lys-81, Gln-148, Asn-173, Cys-177, 210–217 (WGSNMAEM), 241–245 (STFEH), Met-371, Gln-375, Asn-481, 507–508 (SD), Lys-530, Asp-557, and 717–726 (TGRVLEHWHT) contribute to the Mo-bis(molybdopterin guanine dinucleotide) site. Phe-793 lines the substrate pocket. Positions 801 and 818 each coordinate Mo-bis(molybdopterin guanine dinucleotide).

It belongs to the prokaryotic molybdopterin-containing oxidoreductase family. NasA/NapA/NarB subfamily. In terms of assembly, component of the periplasmic nitrate reductase NapAB complex composed of NapA and NapB. [4Fe-4S] cluster is required as a cofactor. Mo-bis(molybdopterin guanine dinucleotide) serves as cofactor. Post-translationally, predicted to be exported by the Tat system. The position of the signal peptide cleavage has not been experimentally proven.

The protein resides in the periplasm. The enzyme catalyses 2 Fe(II)-[cytochrome] + nitrate + 2 H(+) = 2 Fe(III)-[cytochrome] + nitrite + H2O. Functionally, catalytic subunit of the periplasmic nitrate reductase complex NapAB. Receives electrons from NapB and catalyzes the reduction of nitrate to nitrite. The polypeptide is Periplasmic nitrate reductase (Actinobacillus pleuropneumoniae serotype 7 (strain AP76)).